The following is a 333-amino-acid chain: Adenosine deaminase (333 aa).

Zn(2+) is bound by residues histidine 12 and histidine 14. Histidine 14, aspartate 16, and glycine 170 together coordinate substrate. Histidine 197 provides a ligand contact to Zn(2+). Glutamate 200 serves as the catalytic Proton donor. Aspartate 278 contributes to the Zn(2+) binding site. Position 279 (aspartate 279) interacts with substrate.

It belongs to the metallo-dependent hydrolases superfamily. Adenosine and AMP deaminases family. Adenosine deaminase subfamily. It depends on Zn(2+) as a cofactor.

It catalyses the reaction adenosine + H2O + H(+) = inosine + NH4(+). The enzyme catalyses 2'-deoxyadenosine + H2O + H(+) = 2'-deoxyinosine + NH4(+). Functionally, catalyzes the hydrolytic deamination of adenosine and 2-deoxyadenosine. The chain is Adenosine deaminase from Klebsiella pneumoniae subsp. pneumoniae (strain ATCC 700721 / MGH 78578).